The sequence spans 97 residues: Putative septation protein SpoVG (97 aa).

Belongs to the SpoVG family.

Could be involved in septation. This is Putative septation protein SpoVG from Borreliella burgdorferi (strain ATCC 35210 / DSM 4680 / CIP 102532 / B31) (Borrelia burgdorferi).